The primary structure comprises 254 residues: 3-deoxy-manno-octulosonate cytidylyltransferase (254 aa).

It belongs to the KdsB family.

It localises to the cytoplasm. The catalysed reaction is 3-deoxy-alpha-D-manno-oct-2-ulosonate + CTP = CMP-3-deoxy-beta-D-manno-octulosonate + diphosphate. Its pathway is nucleotide-sugar biosynthesis; CMP-3-deoxy-D-manno-octulosonate biosynthesis; CMP-3-deoxy-D-manno-octulosonate from 3-deoxy-D-manno-octulosonate and CTP: step 1/1. The protein operates within bacterial outer membrane biogenesis; lipopolysaccharide biosynthesis. Functionally, activates KDO (a required 8-carbon sugar) for incorporation into bacterial lipopolysaccharide in Gram-negative bacteria. This is 3-deoxy-manno-octulosonate cytidylyltransferase from Geobacter metallireducens (strain ATCC 53774 / DSM 7210 / GS-15).